A 503-amino-acid polypeptide reads, in one-letter code: L-amino-acid oxidase (503 aa).

Residues 1–18 (MNVFFMFSLLFLAALGSC) form the signal peptide. Cys-28 and Cys-191 are oxidised to a cystine. FAD contacts are provided by residues 61–62 (MS), 81–82 (EA), Arg-89, and 105–108 (GPMR). A substrate-binding site is contributed by Arg-108. Residue Asn-190 is glycosylated (N-linked (GlcNAc...) asparagine). His-241 contributes to the substrate binding site. Residue Val-279 coordinates FAD. The cysteines at positions 349 and 430 are disulfide-linked. A substrate-binding site is contributed by Tyr-390. FAD is bound by residues Glu-475 and 482–487 (GWIDST). 482–483 (GW) is a substrate binding site.

This sequence belongs to the flavin monoamine oxidase family. FIG1 subfamily. As to quaternary structure, homodimer; non-covalently linked. FAD is required as a cofactor. N-glycosylated. The enzymatic activity is not affected by deglycosylation. Expressed by the venom gland.

It is found in the secreted. It carries out the reaction an L-alpha-amino acid + O2 + H2O = a 2-oxocarboxylate + H2O2 + NH4(+). The catalysed reaction is L-leucine + O2 + H2O = 4-methyl-2-oxopentanoate + H2O2 + NH4(+). It catalyses the reaction L-phenylalanine + O2 + H2O = 3-phenylpyruvate + H2O2 + NH4(+). The enzyme catalyses L-methionine + O2 + H2O = 4-methylsulfanyl-2-oxobutanoate + H2O2 + NH4(+). It carries out the reaction L-isoleucine + O2 + H2O = (S)-3-methyl-2-oxopentanoate + H2O2 + NH4(+). Functionally, catalyzes an oxidative deamination of predominantly hydrophobic and aromatic L-amino acids, thus producing hydrogen peroxide that may contribute to the diverse toxic effects of this enzyme. Is highly active on L-Met, L-Leu, L-Phe and L-Ile. Exhibits diverse biological activities, such as antibacterial on both Gram-positive and Gram-negative bacteria and antiparasitic activities, as well as induction of platelet aggregation. Effects of snake L-amino oxidases on platelets are controversial, since they either induce aggregation or inhibit agonist-induced aggregation. These different effects are probably due to different experimental conditions. This protein may also have activities in hemorrhage, hemolysis, edema, and apoptosis. This Bothrops pauloensis (Neuwied's lancehead) protein is L-amino-acid oxidase.